The following is a 267-amino-acid chain: 3-methyl-2-oxobutanoate hydroxymethyltransferase (267 aa).

Residues D46 and D85 each contribute to the Mg(2+) site. Residues 46–47 (DS), D85, and K115 each bind 3-methyl-2-oxobutanoate. Residue E117 participates in Mg(2+) binding. Residue E184 is the Proton acceptor of the active site.

The protein belongs to the PanB family. Homodecamer; pentamer of dimers. Requires Mg(2+) as cofactor.

The protein resides in the cytoplasm. It catalyses the reaction 3-methyl-2-oxobutanoate + (6R)-5,10-methylene-5,6,7,8-tetrahydrofolate + H2O = 2-dehydropantoate + (6S)-5,6,7,8-tetrahydrofolate. It functions in the pathway cofactor biosynthesis; (R)-pantothenate biosynthesis; (R)-pantoate from 3-methyl-2-oxobutanoate: step 1/2. In terms of biological role, catalyzes the reversible reaction in which hydroxymethyl group from 5,10-methylenetetrahydrofolate is transferred onto alpha-ketoisovalerate to form ketopantoate. The polypeptide is 3-methyl-2-oxobutanoate hydroxymethyltransferase (Geobacter sulfurreducens (strain ATCC 51573 / DSM 12127 / PCA)).